The chain runs to 111 residues: Cell division protein FtsB (111 aa).

Residues 1–3 (MGK) are Cytoplasmic-facing. Residues 4–21 (LTLLLLILLGWLQYSLWL) form a helical membrane-spanning segment. Over 22-111 (GKNGIHDYVR…TNTSSNNTQR (90 aa)) the chain is Periplasmic. Residues 33-63 (KDDVVVQQGNNAKLKDRNEQLFAEIDDLNGG) adopt a coiled-coil conformation. Residues 88-111 (VPESNHRNANTPSSTNTSSNNTQR) are disordered. A compositionally biased stretch (low complexity) spans 97–111 (NTPSSTNTSSNNTQR).

It belongs to the FtsB family. In terms of assembly, part of a complex composed of FtsB, FtsL and FtsQ.

The protein resides in the cell inner membrane. Its function is as follows. Essential cell division protein. May link together the upstream cell division proteins, which are predominantly cytoplasmic, with the downstream cell division proteins, which are predominantly periplasmic. This is Cell division protein FtsB from Pectobacterium atrosepticum (strain SCRI 1043 / ATCC BAA-672) (Erwinia carotovora subsp. atroseptica).